The chain runs to 102 residues: Large ribosomal subunit protein bL21 (102 aa).

This sequence belongs to the bacterial ribosomal protein bL21 family. As to quaternary structure, part of the 50S ribosomal subunit. Contacts protein L20.

This protein binds to 23S rRNA in the presence of protein L20. In Geotalea daltonii (strain DSM 22248 / JCM 15807 / FRC-32) (Geobacter daltonii), this protein is Large ribosomal subunit protein bL21.